Reading from the N-terminus, the 235-residue chain is High affinity immunoglobulin epsilon receptor subunit beta (235 aa).

The disordered stretch occupies residues 1–23; it reads MDTENRSRADLALPNPQESSSAP. Topologically, residues 1 to 51 are cytoplasmic; the sequence is MDTENRSRADLALPNPQESSSAPDIELLEASPAKAAPPKQTWRTFLKKELE. The helical transmembrane segment at 52-71 threads the bilayer; it reads FLGATQILVGLICLCFGTIV. Residues 72-89 lie on the Extracellular side of the membrane; sequence CSVLYVSDFDEEVLLLYK. Residues 90–109 traverse the membrane as a helical segment; it reads LGYPFWGAVLFVLSGFLSII. Residues 110–122 lie on the Cytoplasmic side of the membrane; sequence SERKNTLYLVRGS. A helical membrane pass occupies residues 123–142; it reads LGANIVSSIAAGTGIAMLIL. At 143-171 the chain is on the extracellular side; that stretch reads NLTNNFAYMNNCKNVTEDDGCFVASFTTE. A helical membrane pass occupies residues 172–191; sequence LVLMMLFLTILAFCSAVLFT. The Cytoplasmic segment spans residues 192 to 235; that stretch reads IYRIGQELESKKVPDDRLYEELNVYSPIYSELEDKGETSSPVDS. Phosphotyrosine occurs at positions 210 and 216. Ser-217 is modified (phosphoserine). Position 220 is a phosphotyrosine (Tyr-220).

The protein belongs to the MS4A family. In terms of assembly, tetramer of an alpha chain, a beta chain, and two disulfide linked gamma chains. Binds LILRB1. Interacts with FGR. Interacts with FGR and FES/FPS. Interacts with LYN. In terms of processing, phosphorylated on tyrosine residues by LYN.

The protein localises to the membrane. Functionally, high affinity receptor that binds to the Fc region of immunoglobulins epsilon. Aggregation of FCER1 by multivalent antigens is required for the full mast cell response, including the release of preformed mediators (such as histamine) by degranulation and de novo production of lipid mediators and cytokines. Also mediates the secretion of important lymphokines. Binding of allergen to receptor-bound IgE leads to cell activation and the release of mediators responsible for the manifestations of allergy. The protein is High affinity immunoglobulin epsilon receptor subunit beta (Ms4a2) of Mus musculus (Mouse).